The chain runs to 427 residues: UPF0229 protein bll6755 (427 aa).

A disordered region spans residues 86–107 (DYLQRSGQGSAKDSGPGEGDSE).

It belongs to the UPF0229 family.

The sequence is that of UPF0229 protein bll6755 from Bradyrhizobium diazoefficiens (strain JCM 10833 / BCRC 13528 / IAM 13628 / NBRC 14792 / USDA 110).